We begin with the raw amino-acid sequence, 154 residues long: UPF0225 protein YpsIP31758_1970 (154 aa).

Belongs to the UPF0225 family.

The sequence is that of UPF0225 protein YpsIP31758_1970 from Yersinia pseudotuberculosis serotype O:1b (strain IP 31758).